Reading from the N-terminus, the 89-residue chain is UPF0237 protein LMOf2365_0562 (89 aa).

An ACT domain is found at 4 to 78; sequence VLTVIGKDNV…EDLQVKIHIQ (75 aa).

Belongs to the UPF0237 family.

This Listeria monocytogenes serotype 4b (strain F2365) protein is UPF0237 protein LMOf2365_0562.